A 475-amino-acid polypeptide reads, in one-letter code: Aspartyl/glutamyl-tRNA(Asn/Gln) amidotransferase subunit B (475 aa).

It belongs to the GatB/GatE family. GatB subfamily. As to quaternary structure, heterotrimer of A, B and C subunits.

The catalysed reaction is L-glutamyl-tRNA(Gln) + L-glutamine + ATP + H2O = L-glutaminyl-tRNA(Gln) + L-glutamate + ADP + phosphate + H(+). The enzyme catalyses L-aspartyl-tRNA(Asn) + L-glutamine + ATP + H2O = L-asparaginyl-tRNA(Asn) + L-glutamate + ADP + phosphate + 2 H(+). Functionally, allows the formation of correctly charged Asn-tRNA(Asn) or Gln-tRNA(Gln) through the transamidation of misacylated Asp-tRNA(Asn) or Glu-tRNA(Gln) in organisms which lack either or both of asparaginyl-tRNA or glutaminyl-tRNA synthetases. The reaction takes place in the presence of glutamine and ATP through an activated phospho-Asp-tRNA(Asn) or phospho-Glu-tRNA(Gln). The sequence is that of Aspartyl/glutamyl-tRNA(Asn/Gln) amidotransferase subunit B from Chlorobium phaeobacteroides (strain BS1).